The sequence spans 469 residues: Receptor-type adenylate cyclase (469 aa).

At 1–59 (VDTAEKLSKNGCASNYGATQISVWSMARALNASIPPLTNPMTPSMTFRNSNAGRISGVA) the chain is on the extracellular side. A glycan (N-linked (GlcNAc...) asparagine) is linked at N31. A helical transmembrane segment spans residues 60–80 (LVGVIIGGALALFLVVALGVV). Topologically, residues 81-469 (PYFFLHNTRD…IDLENDSTTS (389 aa)) are cytoplasmic. A Guanylate cyclase domain is found at 103–257 (TLIFTDIESS…RTSNMAARTE (155 aa)). Residues D108 and D151 each coordinate Mg(2+).

It belongs to the adenylyl cyclase class-3 family. The cofactor is Mg(2+).

The protein localises to the cell membrane. The enzyme catalyses ATP = 3',5'-cyclic AMP + diphosphate. Functionally, could act as a receptor for an unknown ligand. This chain is Receptor-type adenylate cyclase (ESAG4C), found in Trypanosoma equiperdum.